We begin with the raw amino-acid sequence, 314 residues long: uncharacterized protein (314 aa).

An N-terminal signal peptide occupies residues 1-18; that stretch reads MLIQILFLIILTLNCSYS. N-linked (GlcNAc...) asparagine glycans are attached at residues N68, N72, N106, and N256.

The protein resides in the secreted. This is an uncharacterized protein from Caenorhabditis elegans.